Consider the following 180-residue polypeptide: Bifunctional protein PyrR (180 aa).

A PRPP-binding motif is present at residues 101–113 (LIVVDDVLFTGRT).

Belongs to the purine/pyrimidine phosphoribosyltransferase family. PyrR subfamily. Homodimer and homohexamer; in equilibrium.

The enzyme catalyses UMP + diphosphate = 5-phospho-alpha-D-ribose 1-diphosphate + uracil. In terms of biological role, regulates transcriptional attenuation of the pyrimidine nucleotide (pyr) operon by binding in a uridine-dependent manner to specific sites on pyr mRNA. This disrupts an antiterminator hairpin in the RNA and favors formation of a downstream transcription terminator, leading to a reduced expression of downstream genes. Also displays a weak uracil phosphoribosyltransferase activity which is not physiologically significant. The chain is Bifunctional protein PyrR from Bacillus pumilus (strain SAFR-032).